Here is an 880-residue protein sequence, read N- to C-terminus: DNA mismatch repair protein MutS (880 aa).

605–612 (GPNMSGKS) is an ATP binding site. The disordered stretch occupies residues 790–829 (QETAAVPSRGVEPPAPVIEPTPAKEQTPVKEQTTPLVEES). Residues 818-829 (VKEQTTPLVEES) are compositionally biased toward polar residues.

It belongs to the DNA mismatch repair MutS family.

Its function is as follows. This protein is involved in the repair of mismatches in DNA. It is possible that it carries out the mismatch recognition step. This protein has a weak ATPase activity. The polypeptide is DNA mismatch repair protein MutS (Limosilactobacillus fermentum (strain NBRC 3956 / LMG 18251) (Lactobacillus fermentum)).